A 466-amino-acid polypeptide reads, in one-letter code: Glutamate--tRNA ligase 1 (466 aa).

A 'HIGH' region motif is present at residues Pro-9–Gly-19. Zn(2+)-binding residues include Cys-98, Cys-100, Cys-125, and Glu-127. The short motif at Lys-236–Arg-240 is the 'KMSKS' region element. Lys-239 provides a ligand contact to ATP.

It belongs to the class-I aminoacyl-tRNA synthetase family. Glutamate--tRNA ligase type 1 subfamily. In terms of assembly, monomer. Zn(2+) serves as cofactor.

It localises to the cytoplasm. It catalyses the reaction tRNA(Glu) + L-glutamate + ATP = L-glutamyl-tRNA(Glu) + AMP + diphosphate. Its function is as follows. Catalyzes the attachment of glutamate to tRNA(Glu) in a two-step reaction: glutamate is first activated by ATP to form Glu-AMP and then transferred to the acceptor end of tRNA(Glu). This chain is Glutamate--tRNA ligase 1, found in Acidithiobacillus ferrooxidans (strain ATCC 53993 / BNL-5-31) (Leptospirillum ferrooxidans (ATCC 53993)).